The sequence spans 72 residues: UPF0352 protein SO_2176 (72 aa).

This sequence belongs to the UPF0352 family.

This is UPF0352 protein SO_2176 from Shewanella oneidensis (strain ATCC 700550 / JCM 31522 / CIP 106686 / LMG 19005 / NCIMB 14063 / MR-1).